Here is a 95-residue protein sequence, read N- to C-terminus: Aspartyl/glutamyl-tRNA(Asn/Gln) amidotransferase subunit C (95 aa).

This sequence belongs to the GatC family. Heterotrimer of A, B and C subunits.

The catalysed reaction is L-glutamyl-tRNA(Gln) + L-glutamine + ATP + H2O = L-glutaminyl-tRNA(Gln) + L-glutamate + ADP + phosphate + H(+). It catalyses the reaction L-aspartyl-tRNA(Asn) + L-glutamine + ATP + H2O = L-asparaginyl-tRNA(Asn) + L-glutamate + ADP + phosphate + 2 H(+). In terms of biological role, allows the formation of correctly charged Asn-tRNA(Asn) or Gln-tRNA(Gln) through the transamidation of misacylated Asp-tRNA(Asn) or Glu-tRNA(Gln) in organisms which lack either or both of asparaginyl-tRNA or glutaminyl-tRNA synthetases. The reaction takes place in the presence of glutamine and ATP through an activated phospho-Asp-tRNA(Asn) or phospho-Glu-tRNA(Gln). The protein is Aspartyl/glutamyl-tRNA(Asn/Gln) amidotransferase subunit C of Geobacter sp. (strain M21).